A 649-amino-acid polypeptide reads, in one-letter code: MSDSFFKDIPEFLETRVNESLDARSKSIAQFKELGPPDQVNTIKVNAKNPSKEVGTYHFVSGVDASSSASLAAYLNTLSYSLDKSQQWFGKGNAWRVSHGVYCCYNVFSQVDVRVEAKIPGGVDTYAIDENGQKHIVDARMWTEAYMSEVLRSLLYSDDTNSRFAGHRRFNPIPNPDAELRFFEAAEQLFTLGYTLGSSSEVRVPTHVNNHLVRGIFAYLKQTCRYSAALNLFEKLRVSIPEVSVLLAELYLLMDHEVHAVRILHDSLLKQRMSASLLIVQVKFLISKERYDLALICAKRAVHASPSEFATWACLADVYLHLEDFKSALLALNSCPMYTYYERDAYPLPPSARAHLPFPVNFPKEELEVENNAQNGYTVSTEITDPYLARLPSPSLRGTFAKAYEMLTLICAKIGWDELLRVRSAVFVMEEEYRSLNDITEGNASPDQNEVAEESVAEEVVGLDKPETSVGSLPKNATVQSKRLCERWLDNLFMVLYEDLRVFTIWRAEYTHFKSQGLAYRKAPAEWEILGEVAFRLHHRVEAVEAFCACLESMFSFKAWKTLLIIYSEDNNIELVLTAIAKLTLYNYRWYQEYSPFLLEQMKNRIMQDGALKMKSILASTRLDPYILNLIHKLYFEWAIAFQIPGHEL.

It is found in the nucleus. The protein localises to the cytoplasm. This is an uncharacterized protein from Schizosaccharomyces pombe (strain 972 / ATCC 24843) (Fission yeast).